Here is a 246-residue protein sequence, read N- to C-terminus: Bacteriorhodopsin-II-like protein (246 aa).

The next 7 helical transmembrane spans lie at 7-27 (EATW…YFAV), 45-65 (TLIP…LGVI), 82-102 (YADW…VAGA), 107-127 (LYKL…GSMM), 135-155 (IVWW…LLGE), 182-202 (WALY…IIAV), and 205-225 (EIML…AVLL). An N6-(retinylidene)lysine modification is found at Lys217.

This sequence belongs to the archaeal/bacterial/fungal opsin family. The covalent binding of retinal to the apoprotein, bacterioopsin, generates bacteriorhodopsin.

The protein resides in the cell membrane. Its function is as follows. Has no proton-pumping activity but is potentially capable of functioning as a sensory SRII-like protein. The chromophore contains 36.5% all-trans-, 7.6% 11-cis- and 56.4% 13-cis-retinal in the dark and 30.1% 11-cis- and 47.7% 13-cis-retinal upon illumination with &gt;460 nm light. The protein is Bacteriorhodopsin-II-like protein (bop2) of Haloquadratum walsbyi (strain DSM 16790 / HBSQ001).